Reading from the N-terminus, the 272-residue chain is 4-hydroxy-tetrahydrodipicolinate reductase (272 aa).

Residues 11–16 (GAGGRM) and glutamate 37 contribute to the NAD(+) site. Arginine 38 provides a ligand contact to NADP(+). Residues 101–103 (GTT) and 125–128 (AANF) contribute to the NAD(+) site. Histidine 158 functions as the Proton donor/acceptor in the catalytic mechanism. Position 159 (histidine 159) interacts with (S)-2,3,4,5-tetrahydrodipicolinate. The Proton donor role is filled by lysine 162. (S)-2,3,4,5-tetrahydrodipicolinate is bound at residue 168–169 (GT).

This sequence belongs to the DapB family. Homotetramer.

It localises to the cytoplasm. The catalysed reaction is (S)-2,3,4,5-tetrahydrodipicolinate + NAD(+) + H2O = (2S,4S)-4-hydroxy-2,3,4,5-tetrahydrodipicolinate + NADH + H(+). It carries out the reaction (S)-2,3,4,5-tetrahydrodipicolinate + NADP(+) + H2O = (2S,4S)-4-hydroxy-2,3,4,5-tetrahydrodipicolinate + NADPH + H(+). Its pathway is amino-acid biosynthesis; L-lysine biosynthesis via DAP pathway; (S)-tetrahydrodipicolinate from L-aspartate: step 4/4. Catalyzes the conversion of 4-hydroxy-tetrahydrodipicolinate (HTPA) to tetrahydrodipicolinate. This chain is 4-hydroxy-tetrahydrodipicolinate reductase, found in Edwardsiella ictaluri (strain 93-146).